The primary structure comprises 300 residues: Bifunctional protein FolD (300 aa).

NADP(+) is bound by residues glycine 169–serine 171 and isoleucine 235.

The protein belongs to the tetrahydrofolate dehydrogenase/cyclohydrolase family. Homodimer.

The catalysed reaction is (6R)-5,10-methylene-5,6,7,8-tetrahydrofolate + NADP(+) = (6R)-5,10-methenyltetrahydrofolate + NADPH. The enzyme catalyses (6R)-5,10-methenyltetrahydrofolate + H2O = (6R)-10-formyltetrahydrofolate + H(+). Its pathway is one-carbon metabolism; tetrahydrofolate interconversion. Catalyzes the oxidation of 5,10-methylenetetrahydrofolate to 5,10-methenyltetrahydrofolate and then the hydrolysis of 5,10-methenyltetrahydrofolate to 10-formyltetrahydrofolate. This Rhodobacter capsulatus (strain ATCC BAA-309 / NBRC 16581 / SB1003) protein is Bifunctional protein FolD.